The sequence spans 411 residues: Argininosuccinate lyase (411 aa).

This sequence belongs to the lyase 1 family. Argininosuccinate lyase subfamily.

The protein resides in the cytoplasm. The catalysed reaction is 2-(N(omega)-L-arginino)succinate = fumarate + L-arginine. It functions in the pathway amino-acid biosynthesis; L-arginine biosynthesis; L-arginine from L-ornithine and carbamoyl phosphate: step 3/3. The sequence is that of Argininosuccinate lyase from Legionella pneumophila (strain Lens).